The sequence spans 754 residues: uncharacterized protein (754 aa).

10 consecutive transmembrane segments (helical) span residues 3–23 (ITTV…LPQL), 24–44 (PGTL…FIPV), 50–70 (IALT…ILWA), 223–243 (HLMA…AGLI), 254–274 (WIHW…YAWL), 320–340 (VAIL…LIFW), 370–390 (LLLM…SFIA), 392–412 (LLAI…AMVV), 446–466 (WINI…LLVV), and 471–491 (AWRT…WPLW).

To B.subtilis ComEC, N.gonorrhoeae ComA, and H.influenzae Rec2.

The protein resides in the cell membrane. This is an uncharacterized protein from Escherichia coli (strain K12).